The primary structure comprises 245 residues: 6-carboxyhexanoate--CoA ligase (245 aa).

The protein belongs to the BioW family. As to quaternary structure, homodimer. Requires Mg(2+) as cofactor.

It catalyses the reaction heptanedioate + ATP + CoA = 6-carboxyhexanoyl-CoA + AMP + diphosphate. The protein operates within metabolic intermediate metabolism; pimeloyl-CoA biosynthesis; pimeloyl-CoA from pimelate: step 1/1. Its function is as follows. Catalyzes the transformation of pimelate into pimeloyl-CoA with concomitant hydrolysis of ATP to AMP. This chain is 6-carboxyhexanoate--CoA ligase, found in Sulfurihydrogenibium sp. (strain YO3AOP1).